The sequence spans 130 residues: MATRVVATATVRAVKGRKLIPTRAALTLTPAAVLRIKTLLQDKPDMVGLKVGVRQRGCNGLSYTLDYASQKDKLDEEVVQDGVKVFIDKKAQLSLLGTEMDFVESKLSSEFVFNNPNIKGTCGCGESFSM.

A mitochondrion-targeting transit peptide spans 1 to 24 (MATRVVATATVRAVKGRKLIPTRA). The Fe cation site is built by cysteine 58, cysteine 122, and cysteine 124.

It belongs to the HesB/IscA family. Interacts with cry. In terms of tissue distribution, detected in head.

It localises to the mitochondrion. Functionally, involved in the assembly of mitochondrial iron-sulfur proteins. Probably involved in the binding of an intermediate of Fe/S cluster assembly. Required for maintenance of circadian rhythms under constant darkness. The sequence is that of Iron-sulfur cluster assembly 1 homolog, mitochondrial from Drosophila melanogaster (Fruit fly).